The following is a 464-amino-acid chain: Glutamate--tRNA ligase (464 aa).

The 'HIGH' region signature appears at 10–20; sequence PSPTGHLHLGG. Zn(2+) contacts are provided by cysteine 99, cysteine 101, cysteine 126, and glutamate 128. The short motif at 236–240 is the 'KMSKS' region element; it reads KLSKR. Lysine 239 lines the ATP pocket.

This sequence belongs to the class-I aminoacyl-tRNA synthetase family. Glutamate--tRNA ligase type 1 subfamily. In terms of assembly, monomer. Zn(2+) serves as cofactor.

Its subcellular location is the cytoplasm. It catalyses the reaction tRNA(Glu) + L-glutamate + ATP = L-glutamyl-tRNA(Glu) + AMP + diphosphate. Functionally, catalyzes the attachment of glutamate to tRNA(Glu) in a two-step reaction: glutamate is first activated by ATP to form Glu-AMP and then transferred to the acceptor end of tRNA(Glu). This is Glutamate--tRNA ligase from Oleidesulfovibrio alaskensis (strain ATCC BAA-1058 / DSM 17464 / G20) (Desulfovibrio alaskensis).